The following is a 434-amino-acid chain: Adenylosuccinate synthetase (434 aa).

Residues 15–21 (GDEGKGK) and 43–45 (GHT) each bind GTP. The active-site Proton acceptor is the aspartate 16. Residues aspartate 16 and glycine 43 each coordinate Mg(2+). Residues 16–19 (DEGK), 41–44 (NAGH), threonine 133, arginine 147, glutamine 228, threonine 243, and arginine 307 each bind IMP. The active-site Proton donor is histidine 44. Residue 303–309 (SVTGRAR) participates in substrate binding. GTP is bound by residues arginine 309, 335-337 (KLD), and 418-420 (STG).

The protein belongs to the adenylosuccinate synthetase family. In terms of assembly, homodimer. Requires Mg(2+) as cofactor.

The protein resides in the cytoplasm. It carries out the reaction IMP + L-aspartate + GTP = N(6)-(1,2-dicarboxyethyl)-AMP + GDP + phosphate + 2 H(+). It functions in the pathway purine metabolism; AMP biosynthesis via de novo pathway; AMP from IMP: step 1/2. Its function is as follows. Plays an important role in the de novo pathway of purine nucleotide biosynthesis. Catalyzes the first committed step in the biosynthesis of AMP from IMP. This chain is Adenylosuccinate synthetase, found in Neisseria meningitidis serogroup C / serotype 2a (strain ATCC 700532 / DSM 15464 / FAM18).